A 485-amino-acid chain; its full sequence is Glutamyl-tRNA(Gln) amidotransferase subunit A (485 aa).

Residues Lys-79 and Ser-154 each act as charge relay system in the active site. Residue Ser-178 is the Acyl-ester intermediate of the active site.

It belongs to the amidase family. GatA subfamily. In terms of assembly, heterotrimer of A, B and C subunits.

The enzyme catalyses L-glutamyl-tRNA(Gln) + L-glutamine + ATP + H2O = L-glutaminyl-tRNA(Gln) + L-glutamate + ADP + phosphate + H(+). Allows the formation of correctly charged Gln-tRNA(Gln) through the transamidation of misacylated Glu-tRNA(Gln) in organisms which lack glutaminyl-tRNA synthetase. The reaction takes place in the presence of glutamine and ATP through an activated gamma-phospho-Glu-tRNA(Gln). The chain is Glutamyl-tRNA(Gln) amidotransferase subunit A from Staphylococcus aureus (strain Mu3 / ATCC 700698).